Here is a 227-residue protein sequence, read N- to C-terminus: Probable septum site-determining protein MinC (227 aa).

It belongs to the MinC family. As to quaternary structure, interacts with MinD and FtsZ.

Cell division inhibitor that blocks the formation of polar Z ring septums. Rapidly oscillates between the poles of the cell to destabilize FtsZ filaments that have formed before they mature into polar Z rings. Prevents FtsZ polymerization. This is Probable septum site-determining protein MinC from Photorhabdus laumondii subsp. laumondii (strain DSM 15139 / CIP 105565 / TT01) (Photorhabdus luminescens subsp. laumondii).